Consider the following 444-residue polypeptide: Porin AaxA (444 aa).

A signal peptide spans 1–19 (MAFSRFYLLTALYTGGILA). The tract at residues 42 to 68 (KNSTQDSDSSPSESSPHPRQEPRRHVL) is disordered. The span at 46-56 (QDSDSSPSESS) shows a compositional bias: low complexity.

Belongs to the OprB family.

The protein resides in the cell outer membrane. Facilitates L-arginine uptake, as part of the AaxABC system. The arginine uptake by the bacterium in the macrophage may be a virulence factor against the host innate immune response. This is Porin AaxA (aaxA) from Chlamydia felis (strain Fe/C-56) (Chlamydophila felis).